A 193-amino-acid chain; its full sequence is 5'RNA triphosphatase A449R (193 aa).

Mn(2+) is required as a cofactor.

It carries out the reaction a 5'-end triphospho-ribonucleoside in mRNA + H2O = a 5'-end diphospho-ribonucleoside in mRNA + phosphate + H(+). Catalyzes the first stes of cap formation: by removing the gamma-phosphate from the 5'-triphosphate end of nascent mRNA to yield a diphosphate end. In Chlorella (PBCV-1), this protein is 5'RNA triphosphatase A449R (A449R).